The sequence spans 492 residues: 1-aminocyclopropane-1-carboxylate synthase 1 (492 aa).

An N6-(pyridoxal phosphate)lysine modification is found at Lys-277.

This sequence belongs to the class-I pyridoxal-phosphate-dependent aminotransferase family. Homodimer. Requires pyridoxal 5'-phosphate as cofactor.

It carries out the reaction S-adenosyl-L-methionine = 1-aminocyclopropane-1-carboxylate + S-methyl-5'-thioadenosine + H(+). Its pathway is alkene biosynthesis; ethylene biosynthesis via S-adenosyl-L-methionine; ethylene from S-adenosyl-L-methionine: step 1/2. Functionally, catalyzes the formation of 1-aminocyclopropane-1-carboxylate, a direct precursor of ethylene in higher plants. The protein is 1-aminocyclopropane-1-carboxylate synthase 1 (ACS1) of Prunus mume (Japanese apricot).